Consider the following 420-residue polypeptide: Nucleobindin-2 (420 aa).

The signal sequence occupies residues 1–24; that stretch reads MRWRTIQARYCFLLVPCVLTALEA. Residues 171–223 mediate DNA binding; the sequence is RTRHEEFKKYEMMKEHERREYLKTLSEEKRKEEEAKFAEMKRKHEDHPKVNHP. The interval 194-225 is disordered; that stretch reads TLSEEKRKEEEAKFAEMKRKHEDHPKVNHPGS. Residues 213 to 420 are binds to necdin; that stretch reads KHEDHPKVNH…AGELKFEPHT (208 aa). EF-hand domains follow at residues 241–276 and 293–328; these read PNDF…ELDK and ERLR…KEFL. Ca(2+) contacts are provided by Asp254, Asn256, Asp258, Glu265, Asp306, Asn308, Asp310, and Glu317. Positions 304–334 match the GBA motif; the sequence is EIDNNKDRLVTLEEFLRATEKKEFLEPDSWE. The residue at position 332 (Ser332) is a Phosphoserine. Basic and acidic residues predominate over residues 366 to 386; the sequence is DELQKQKEELQRQHDHLEAQK. A disordered region spans residues 366-420; the sequence is DELQKQKEELQRQHDHLEAQKQEYQQAVQQLEQKKFQQGIAPSGPAGELKFEPHT. The span at 387–396 shows a compositional bias: low complexity; it reads QEYQQAVQQL.

The protein belongs to the nucleobindin family. In terms of assembly, interacts (via GBA motif) with guanine nucleotide-binding protein G(i) alpha subunit GNAI3. Preferentially interacts with inactive rather than active GNAI3. Interaction with GNAI3 is inhibited when NUCB2 binds calcium, probably due to a conformational change which renders the GBA motif inaccessible. Binds to the postmitotic growth suppressor NDN; coexpression abolishes NUCB2 secretion. Interacts with MC4R.

It is found in the golgi apparatus. Its subcellular location is the endoplasmic reticulum. The protein localises to the nucleus envelope. It localises to the membrane. The protein resides in the cytoplasm. It is found in the secreted. Its function is as follows. Calcium-binding protein which may have a role in calcium homeostasis. Acts as a non-receptor guanine nucleotide exchange factor which binds to and activates guanine nucleotide-binding protein (G-protein) alpha subunit GNAI3. Anorexigenic peptide, seems to play an important role in hypothalamic pathways regulating food intake and energy homeostasis, acting in a leptin-independent manner. May also exert hypertensive roles and modulate blood pressure through directly acting on peripheral arterial resistance. In intestinal epithelial cells, plays a role in the inhibition of hepatic glucose production via MC4R receptor leading to increased cyclic adenosine monophosphate (cAMP) levels and glucagon-like peptide 1 (GLP-1) secretion. The polypeptide is Nucleobindin-2 (Nucb2) (Rattus norvegicus (Rat)).